Here is a 517-residue protein sequence, read N- to C-terminus: Crotonobetaine/carnitine--CoA ligase (517 aa).

The protein belongs to the ATP-dependent AMP-binding enzyme family.

The enzyme catalyses 4-(trimethylamino)butanoate + ATP + CoA = 4-(trimethylamino)butanoyl-CoA + AMP + diphosphate. It carries out the reaction crotonobetaine + ATP + CoA = crotonobetainyl-CoA + AMP + diphosphate. The catalysed reaction is (R)-carnitine + ATP + CoA = (R)-carnitinyl-CoA + AMP + diphosphate. It participates in amine and polyamine metabolism; carnitine metabolism. Catalyzes the transfer of CoA to carnitine, generating the initial carnitinyl-CoA needed for the CaiB reaction cycle. Also has activity toward crotonobetaine and gamma-butyrobetaine. The polypeptide is Crotonobetaine/carnitine--CoA ligase (Shigella flexneri).